Here is a 501-residue protein sequence, read N- to C-terminus: Putative glycogen synthase kinase-3 homolog (501 aa).

A Protein kinase domain is found at Tyr33–Phe317. ATP is bound by residues Val39 to Val47 and Lys62. Asp158 serves as the catalytic Proton acceptor. Tyr193 is subject to Phosphotyrosine. Disordered stretches follow at residues Leu355–Val427 and Ser446–Asn501. Positions Glu381–Gln390 are enriched in basic and acidic residues. 2 stretches are compositionally biased toward acidic residues: residues Glu451–Asp471 and Asp482–Asn501.

It belongs to the protein kinase superfamily. CMGC Ser/Thr protein kinase family. GSK-3 subfamily. In terms of processing, phosphorylation on Tyr-193 is necessary for the activity.

The catalysed reaction is L-seryl-[tau protein] + ATP = O-phospho-L-seryl-[tau protein] + ADP + H(+). It carries out the reaction L-threonyl-[tau protein] + ATP = O-phospho-L-threonyl-[tau protein] + ADP + H(+). The polypeptide is Putative glycogen synthase kinase-3 homolog (gskt) (Drosophila melanogaster (Fruit fly)).